Reading from the N-terminus, the 383-residue chain is Large ribosomal subunit protein uL2m (383 aa).

Disordered stretches follow at residues 97–122 (FPKK…GGGH) and 322–357 (MNAN…YKTR). Basic residues-rich tracts occupy residues 106–122 (GRNH…GGGH) and 330–340 (GGGRGKSKGNR).

It belongs to the universal ribosomal protein uL2 family. Component of the mitochondrial large ribosomal subunit (mt-LSU). Mature N.crassa 74S mitochondrial ribosomes consist of a small (37S) and a large (54S) subunit. The 37S small subunit contains a 16S ribosomal RNA (16S mt-rRNA) and 32 different proteins. The 54S large subunit contains a 23S rRNA (23S mt-rRNA) and 42 different proteins.

It is found in the mitochondrion. Its function is as follows. Component of the mitochondrial ribosome (mitoribosome), a dedicated translation machinery responsible for the synthesis of mitochondrial genome-encoded proteins, including at least some of the essential transmembrane subunits of the mitochondrial respiratory chain. The mitoribosomes are attached to the mitochondrial inner membrane and translation products are cotranslationally integrated into the membrane. This is Large ribosomal subunit protein uL2m (rml2) from Neurospora crassa (strain ATCC 24698 / 74-OR23-1A / CBS 708.71 / DSM 1257 / FGSC 987).